The primary structure comprises 102 residues: MIPGEVITPETDIELNVGRETLKVVVANLGDRPIQVGSHFHFYEANDALQFDREAVKGFRLNIAAGTAIRFEPGQSREVEIVALAGKREVYGFAGRVMGKLD.

It belongs to the urease beta subunit family. In terms of assembly, heterotrimer of UreA (gamma), UreB (beta) and UreC (alpha) subunits. Three heterotrimers associate to form the active enzyme.

The protein localises to the cytoplasm. It catalyses the reaction urea + 2 H2O + H(+) = hydrogencarbonate + 2 NH4(+). It functions in the pathway nitrogen metabolism; urea degradation; CO(2) and NH(3) from urea (urease route): step 1/1. The sequence is that of Urease subunit beta from Acinetobacter baumannii (strain AB307-0294).